The sequence spans 66 residues: Conotoxin Ca5.2 (66 aa).

A signal peptide spans 1 to 22 (MRCVPVFLILLGLIASAPSVDA). The propeptide occupies 23–48 (RPQTKDDALASFHDSAKRHLQRLVNA). Phenylalanine amide is present on Phe62.

It belongs to the conotoxin T superfamily. Post-translationally, contains 2 disulfide bonds that can be either 'C1-C3, C2-C4' or 'C1-C4, C2-C3', since these disulfide connectivities have been observed for conotoxins with cysteine framework V (for examples, see AC P0DQQ7 and AC P81755). In terms of tissue distribution, expressed by the venom duct.

The protein localises to the secreted. This chain is Conotoxin Ca5.2, found in Conus caracteristicus (Characteristic cone).